The primary structure comprises 215 residues: 2-dehydro-3-deoxy-phosphogluconate aldolase (215 aa).

Glu46 (proton acceptor) is an active-site residue. Residues Arg50, Thr74, and Lys134 each contribute to the pyruvate site. Lys134 serves as the catalytic Schiff-base intermediate with substrate.

Belongs to the KHG/KDPG aldolase family. As to quaternary structure, homotrimer.

It carries out the reaction 2-dehydro-3-deoxy-6-phospho-D-gluconate = D-glyceraldehyde 3-phosphate + pyruvate. The protein operates within carbohydrate acid metabolism; 2-dehydro-3-deoxy-D-gluconate degradation; D-glyceraldehyde 3-phosphate and pyruvate from 2-dehydro-3-deoxy-D-gluconate: step 2/2. Involved in the degradation of glucose via the Entner-Doudoroff pathway. Catalyzes the reversible, stereospecific retro-aldol cleavage of 2-keto-3-deoxy-6-phosphogluconate (KDPG) to pyruvate and D-glyceraldehyde-3-phosphate. Involved in the degradation of 3,6-anhydro-L-galactose (L-AnG), which is the major monomeric sugar of red macroalgae. The cleavage of KDPG to glyceraldehyde 3-phosphate and pyruvate is the sixth step of this pathway. In Pseudoalteromonas atlantica (strain T6c / ATCC BAA-1087), this protein is 2-dehydro-3-deoxy-phosphogluconate aldolase.